We begin with the raw amino-acid sequence, 65 residues long: MPKLKTSKAAAKRFKVTGTGKLKRMKAGKQHILTKKSQKTKRNLRKATMMDPSNEKNMKKILPYL.

The segment at 23-44 is disordered; it reads KRMKAGKQHILTKKSQKTKRNL.

The protein belongs to the bacterial ribosomal protein bL35 family.

The protein is Large ribosomal subunit protein bL35 of Lachnoclostridium phytofermentans (strain ATCC 700394 / DSM 18823 / ISDg) (Clostridium phytofermentans).